Reading from the N-terminus, the 443-residue chain is Methyl-coenzyme M reductase I subunit beta (443 aa).

Tyrosine 367 is a coenzyme M binding site. Glycine 369 serves as a coordination point for coenzyme B.

The protein belongs to the methyl-coenzyme M reductase beta subunit family. In terms of assembly, MCR is a hexamer of two alpha, two beta, and two gamma chains, forming a dimer of heterotrimers. It depends on coenzyme F430 as a cofactor.

It localises to the cytoplasm. The catalysed reaction is coenzyme B + methyl-coenzyme M = methane + coenzyme M-coenzyme B heterodisulfide. It participates in one-carbon metabolism; methyl-coenzyme M reduction; methane from methyl-coenzyme M: step 1/1. With respect to regulation, methyl-coenzyme M reductase activity is inhibited by 3-nitrooxypropanol (3-NOP) in vitro and in vivo, by oxidation of its active site Ni(I), which stops both growth and methanogenesis. Is also inhibited by the reaction product CoM-S-S-CoB. Its function is as follows. Component of the methyl-coenzyme M reductase (MCR) I that catalyzes the reductive cleavage of methyl-coenzyme M (CoM-S-CH3 or 2-(methylthio)ethanesulfonate) using coenzyme B (CoB or 7-mercaptoheptanoylthreonine phosphate) as reductant which results in the production of methane and the mixed heterodisulfide of CoB and CoM (CoM-S-S-CoB). This is the final step in methanogenesis. Neither N-6-mercaptohexanoylthreonine phosphate (H-S-HxoTP) nor N-8-mercaptooctanoylthreonine phosphate (H-SOcoTP) nor any other thiol compound such as CoA or CoM can substitute for CoB as the electron donor. The chain is Methyl-coenzyme M reductase I subunit beta (mcrB) from Methanothermobacter marburgensis (strain ATCC BAA-927 / DSM 2133 / JCM 14651 / NBRC 100331 / OCM 82 / Marburg) (Methanobacterium thermoautotrophicum).